A 176-amino-acid chain; its full sequence is Glutathione-regulated potassium-efflux system ancillary protein KefF (176 aa).

FMN contacts are provided by residues H8, 14 to 17 (SHAN), 65 to 68 (MQWY), and 105 to 108 (TTGG).

This sequence belongs to the NAD(P)H dehydrogenase (quinone) family. KefF subfamily. As to quaternary structure, homodimer. Interacts with KefC. It depends on FMN as a cofactor.

It localises to the cell inner membrane. The enzyme catalyses a quinone + NADH + H(+) = a quinol + NAD(+). It carries out the reaction a quinone + NADPH + H(+) = a quinol + NADP(+). Regulatory subunit of a potassium efflux system that confers protection against electrophiles. Required for full activity of KefC. Shows redox enzymatic activity, but this enzymatic activity is not required for activation of KefC. The polypeptide is Glutathione-regulated potassium-efflux system ancillary protein KefF (Salmonella gallinarum (strain 287/91 / NCTC 13346)).